Reading from the N-terminus, the 258-residue chain is UPF0246 protein VV1_0535 (258 aa).

The protein belongs to the UPF0246 family.

The polypeptide is UPF0246 protein VV1_0535 (Vibrio vulnificus (strain CMCP6)).